We begin with the raw amino-acid sequence, 104 residues long: UPF0235 protein MTH_637 (104 aa).

The protein belongs to the UPF0235 family.

The sequence is that of UPF0235 protein MTH_637 from Methanothermobacter thermautotrophicus (strain ATCC 29096 / DSM 1053 / JCM 10044 / NBRC 100330 / Delta H) (Methanobacterium thermoautotrophicum).